The primary structure comprises 204 residues: Dephospho-CoA kinase (204 aa).

The DPCK domain maps to 5 to 204; it reads VVGLTGGIGS…YLANLVKAML (200 aa). Position 13–18 (13–18) interacts with ATP; it reads GSGKSA.

It belongs to the CoaE family.

Its subcellular location is the cytoplasm. The catalysed reaction is 3'-dephospho-CoA + ATP = ADP + CoA + H(+). The protein operates within cofactor biosynthesis; coenzyme A biosynthesis; CoA from (R)-pantothenate: step 5/5. In terms of biological role, catalyzes the phosphorylation of the 3'-hydroxyl group of dephosphocoenzyme A to form coenzyme A. The polypeptide is Dephospho-CoA kinase (Chromobacterium violaceum (strain ATCC 12472 / DSM 30191 / JCM 1249 / CCUG 213 / NBRC 12614 / NCIMB 9131 / NCTC 9757 / MK)).